The chain runs to 267 residues: Indole-3-glycerol phosphate synthase 1 (267 aa).

It belongs to the TrpC family.

The catalysed reaction is 1-(2-carboxyphenylamino)-1-deoxy-D-ribulose 5-phosphate + H(+) = (1S,2R)-1-C-(indol-3-yl)glycerol 3-phosphate + CO2 + H2O. The protein operates within amino-acid biosynthesis; L-tryptophan biosynthesis; L-tryptophan from chorismate: step 4/5. The sequence is that of Indole-3-glycerol phosphate synthase 1 (trpC1) from Ralstonia nicotianae (strain ATCC BAA-1114 / GMI1000) (Ralstonia solanacearum).